Reading from the N-terminus, the 61-residue chain is Small ribosomal subunit protein uS14 (61 aa).

Residues Cys-24, Cys-27, Cys-40, and Cys-43 each contribute to the Zn(2+) site.

Belongs to the universal ribosomal protein uS14 family. Zinc-binding uS14 subfamily. In terms of assembly, part of the 30S ribosomal subunit. Contacts proteins S3 and S10. Zn(2+) serves as cofactor.

Binds 16S rRNA, required for the assembly of 30S particles and may also be responsible for determining the conformation of the 16S rRNA at the A site. The polypeptide is Small ribosomal subunit protein uS14 (Mycobacterium sp. (strain JLS)).